A 266-amino-acid polypeptide reads, in one-letter code: Norfluorocurarine synthase 1 (266 aa).

The region spanning 11–121 is the AB hydrolase-1 domain; sequence HFVLVHGAGH…VMPDAVHPPS (111 aa). Residues Ser-86, Asp-216, and His-244 contribute to the active site.

It belongs to the AB hydrolase superfamily. As to quaternary structure, homodimer. Mainly expressed in roots.

It catalyses the reaction 17-dehydropreakuammicine + H2O = norfluorocurarine + methanol + CO2. It functions in the pathway alkaloid biosynthesis. Its function is as follows. Hydrolase involved in the biosynthesis of curare monoterpene indole alkaloids (MIAs), natural products such as strychnine, a neurotoxic compound used as a pesticide to control rodents, and its pharmacologically active derivatives, including brucine, used to regulate blood pressure. Curare alkaloids act as animal glycine receptor antagonists. Catalyzes the conversion of dehydropreakuammicine to norfluorocurarine. The polypeptide is Norfluorocurarine synthase 1 (Strychnos nux-vomica (Poison nut)).